The chain runs to 275 residues: WIMGHMVNAIYQIDEFVDLGANAIETDVEFSSSGKAKYTYHGVPCDCFRWCKKWENIDGFLEALRRATTPGDSKYRKELILVVLDLKLDYVYLSDAYDAGKDLAQRLVKHYWNGGRNGGRAYILLSVPVVEYYRLITGFRAHLMNEGYKDLLAKVGYDFSEDTYLSTIHDGFRNAGVRDKDHIWQSDGISNCFARTLTRLKEAVSNRDSTDGYSNKVYYWTVDKETSITDAINAGADGIMTNHPDRVINVPKDDEIKKKFRLARYRDNPWKTFRK.

H5 is an active-site residue. Mg(2+) is bound by residues E25 and D27. H41 functions as the Nucleophile in the catalytic mechanism. Intrachain disulfides connect C45-C51 and C47-C192. D85 lines the Mg(2+) pocket.

The protein belongs to the arthropod phospholipase D family. Class II subfamily. Requires Mg(2+) as cofactor. In terms of tissue distribution, expressed by the venom gland.

It is found in the secreted. It carries out the reaction an N-(acyl)-sphingosylphosphocholine = an N-(acyl)-sphingosyl-1,3-cyclic phosphate + choline. It catalyses the reaction an N-(acyl)-sphingosylphosphoethanolamine = an N-(acyl)-sphingosyl-1,3-cyclic phosphate + ethanolamine. The enzyme catalyses a 1-acyl-sn-glycero-3-phosphocholine = a 1-acyl-sn-glycero-2,3-cyclic phosphate + choline. The catalysed reaction is a 1-acyl-sn-glycero-3-phosphoethanolamine = a 1-acyl-sn-glycero-2,3-cyclic phosphate + ethanolamine. Dermonecrotic toxins cleave the phosphodiester linkage between the phosphate and headgroup of certain phospholipids (sphingolipid and lysolipid substrates), forming an alcohol (often choline) and a cyclic phosphate. This toxin acts on sphingomyelin (SM). It may also act on ceramide phosphoethanolamine (CPE), lysophosphatidylcholine (LPC) and lysophosphatidylethanolamine (LPE), but not on lysophosphatidylserine (LPS), and lysophosphatidylglycerol (LPG). It acts by transphosphatidylation, releasing exclusively cyclic phosphate products as second products. Induces dermonecrosis, hemolysis, increased vascular permeability, edema, inflammatory response, and platelet aggregation. This Loxosceles hirsuta (Recluse spider) protein is Dermonecrotic toxin LhSicTox-alphaVI1i.